A 412-amino-acid chain; its full sequence is Arginine biosynthesis bifunctional protein ArgJ (412 aa).

The substrate site is built by T155, K181, T192, E279, N407, and S412. T192 functions as the Nucleophile in the catalytic mechanism.

The protein belongs to the ArgJ family. Heterotetramer of two alpha and two beta chains.

Its subcellular location is the cytoplasm. The catalysed reaction is N(2)-acetyl-L-ornithine + L-glutamate = N-acetyl-L-glutamate + L-ornithine. It carries out the reaction L-glutamate + acetyl-CoA = N-acetyl-L-glutamate + CoA + H(+). The protein operates within amino-acid biosynthesis; L-arginine biosynthesis; L-ornithine and N-acetyl-L-glutamate from L-glutamate and N(2)-acetyl-L-ornithine (cyclic): step 1/1. It functions in the pathway amino-acid biosynthesis; L-arginine biosynthesis; N(2)-acetyl-L-ornithine from L-glutamate: step 1/4. In terms of biological role, catalyzes two activities which are involved in the cyclic version of arginine biosynthesis: the synthesis of N-acetylglutamate from glutamate and acetyl-CoA as the acetyl donor, and of ornithine by transacetylation between N(2)-acetylornithine and glutamate. The sequence is that of Arginine biosynthesis bifunctional protein ArgJ from Aromatoleum aromaticum (strain DSM 19018 / LMG 30748 / EbN1) (Azoarcus sp. (strain EbN1)).